A 312-amino-acid chain; its full sequence is DNA-directed RNA polymerase subunit alpha (312 aa).

Positions 1–229 (MLQYQIDRID…ELFQPLATVS (229 aa)) are alpha N-terminal domain (alpha-NTD). An alpha C-terminal domain (alpha-CTD) region spans residues 239–312 (EPAAEAQIPL…ISIPQSRTSA (74 aa)).

It belongs to the RNA polymerase alpha chain family. As to quaternary structure, in cyanobacteria the RNAP catalytic core is composed of 2 alpha, 1 beta, 1 beta', 1 gamma and 1 omega subunit. When a sigma factor is associated with the core the holoenzyme is formed, which can initiate transcription.

It carries out the reaction RNA(n) + a ribonucleoside 5'-triphosphate = RNA(n+1) + diphosphate. In terms of biological role, DNA-dependent RNA polymerase catalyzes the transcription of DNA into RNA using the four ribonucleoside triphosphates as substrates. The polypeptide is DNA-directed RNA polymerase subunit alpha (Prochlorococcus marinus (strain NATL1A)).